A 141-amino-acid chain; its full sequence is Hemoglobin subunit alpha-3 (141 aa).

In terms of domain architecture, Globin spans 1-141; the sequence is VLSPADKTNV…VSTVLTSKYR (141 aa). His58 contacts O2. Residue His87 participates in heme b binding.

The protein belongs to the globin family. As to quaternary structure, heterotetramer of two alpha chains and two beta chains. Red blood cells.

Functionally, involved in oxygen transport from the lung to the various peripheral tissues. This Gorilla gorilla gorilla (Western lowland gorilla) protein is Hemoglobin subunit alpha-3.